A 2626-amino-acid chain; its full sequence is MNVSDGGRRRFEDNEHTLRIYPGTISEGTIYCPIPARKNSTAAEVIDSLINRLHLDKTKCYVLAEVKEFGGEEWILNPTDCPVQRMMLWPRMALENRLSGEDYRFLLREKNLDGSIHYGSLQSWLRVTEERRRMMERGFLPQPQQKDFDDLCSLPDLNEKTLLENLRNRFKHEKIYTYVGSILIAINPFKFLPIYNPKYVKMYDNHQLGKLEPHIYAVADVAYHAMLQRKKNQCIVISGESGSGKTQSTNFLIHHLTALSQKGFASGVEQIILGAGPVLEAFGNAKTAHNNNSSRFGKFIQVNYQETGTVLGAYVEKYLLEKSRLVYQEHNERNYHVFYYLLAGASEEERLAFHLKQPEEYHFLNQITKKPLRQSWDDYCYDSEPDCFTVEGEDLRHDFERLQLAMEMVGFLPKTRRQIFSLLSAILHLGNISYKKKTYRDDSIDICNPEVLPIVSELLEVKEEMLFEALVTRKTVTVGEKLILPYKLAEAVTVRNSMAKSLYSALFDWIVFRINHALLNSKDLEKDTKTLSIGVLDIFGFEDYENNSFEQFCINFANERLQHYFNQHIFKLEQEEYRTEGISWHNIDYIDNTCCINLISKKPTGLLHLLDEESNFPQATNQTLLDKFKHQHEENSYIEFPAVMEPAFIIKHYAGKVKYGVKDFREKNTDHMRPDIVALLRSSRNAFVSGMTGIDPVAVFRWAVLRAFFRAVVAFREAGKRHIQRKSGHDDTTPCTILKSMDSFSFLQHPVHQRSLEILQRCKEEKYSITRKNPRTPLSDLQGMNTLNEKNQHDTFDIAWNVRTGIRQSRLPTNNTSLLDKDGIFANSASSKLLERAHGILTRNKNFRSKPVLPKHLLEVNSLKHLTRLTLQDRITKSLLHLHKKKKPPSISAQFQVSLSKLMETLDQAEPYFVKCIRSNAEKLPLRFSDALVLRQLRYTGMLETVRIRQSGYSSKYSFQDFVSHFHVLLPQHIIPSKFNIQDFFRKININPDNYQVGKTMVFLKEHERQHLQDLLHQEVLRRIILLQRWFRVLLSRQQFLHLRQASVIIQRFWRNYLNQKQVRNAAVEKDAFIMASAASLLQASWRAHLERQRYLELRAAAVIIQQRWRELCRRRHRAATCIQSRWRGYRQSKKYKEQRNKIILLQSIYRGFRARQRYKALKEERLKETKLEHGLAQIKTCGPLEIQGSDPSEWEDRSFANRVKAIEECKSVIESNRISRESSMDFSKESPDKQQERGRSQSGTDLQGDVIVRQRPKSLEDLHQKKVGRAKRESRRMRELEQAIFSLELLKVRSLGGMSPSEERRWSTELMPEGLQSPQGTPDSESSQGSLELLTCDENQKSKPESLILDDGELKISSPSTFTNPKFDSQNNALSASSETSSTFSGKGASSDSEHLKNGTAEEKLVYSSQPITCKSQLRDSFVSSSLPTFFYIPHQEPLKTSSQLDTSIQRNKLPERETTLKTTLTLDINREARKCQFSGQVTPLNPDSSCTVLKKLEKLNIEKEKRQKQLQQQNEKEMMEQIRQQTDILEKERKAFKTIEQSRTEASLLAPSFYQSRQKVERPSSLHIQNTPSKGEAGVLGSPSALATKDSPSIHLPPKDRPVTLFFERKGSPCQSRTVKELTKTERMGTQHDAACRLSNNHNTEREHFKSTHSYSHRSDDPSREGSSRPIFFTPKDNVITPLVHSGNPQVHKQDEPAWKSKLAGPGQREVARPAHKKKARMARTRSDFLTRGTFADGEGDTEEDDYDDIIEPLLSLDQASHSELGPVSSLGQASHSDSEMTSQRFSSVDEQARLHKAMSQGEITKLAGRQKSSDLDIRPQRAKMRFWAKGKQGEKKTTRVKPAPQSEVSSLFAGSDVTPVHPFSDELTQYHPTPPLSPELPGSCRKEFKENKEPSPKAKRKRGVKISSVALDSMHWQNDSVQIIASANDLKSMDEFLLKKMNDLDNEDSKKDTLVDVVFKKALKEFRQNIFSSYSSALAMDDGKSIRYKDLYALFEQILEKTMRFEQRDWNESPVRVWVNTFKVFLDEYMNEFKTLDSTAPKVLKTERKKRRKKETDLVEEHNGHMFKATQYSIPTYCEYCSSLIWIMDRASVCKLCKYACHKKCCLKTTAKCSKKYDPELSSRQFGVELSRLTSEDRAVPLVVEKLINYIEMHGLYTEGIYRKSGSTNKIKELRQGLDTDAESVNLDDYNIHVIASVFKQWLRDLPNPLMTFELYEEFLRAMGLQERKETIRGVYSVIDQLSRTHLSTLERLIFHLVRIALQEDTNRMSANALAIVFAPCILRCPDTTDPLQSVQDISKTTTCVELIVVEQMNKYKARLKDISSLEFAENKAKTRLSLIRRSMKPVLIAVRFMSITRSSVSGKGRLHRGSHPNPSSPVIVRLPSMSDVPEETLTSETAMDTDVTDQQQAAMQQEEKVLTEQIENLQKEKEELTFEMLVLEPRASDDEALESEASIGTADSSENLNMDPEERSLALSSLKAAGKSEPSSKFRKQLRKQPDSLDSVSSSVSSCLSNTTSSHGTRKRFQIYSKSPFYRAASACEAQGMEGPLGQAKSLEDRPQFISRGTFNPEKGKQKLKNVKNSPQKTKETPEGTVSSGRKKTVDSDCSSTQQLPLFGNNEFMV.

The Ras-associating domain maps to 14 to 112; that stretch reads NEHTLRIYPG…YRFLLREKNL (99 aa). Residues 146-1017 form the Myosin motor domain; sequence KDFDDLCSLP…ERQHLQDLLH (872 aa). A helical transmembrane segment spans residues 175–195; sequence IYTYVGSILIAINPFKFLPIY. ATP is bound at residue 239–246; sequence GESGSGKT. Serine 755 carries the phosphoserine modification. The interval 908 to 919 is actin-binding; sequence QAEPYFVKCIRS. IQ domains lie at 1021-1041, 1043-1072, 1075-1104, 1116-1145, and 1139-1168; these read LRRI…QQFL, LRQA…EKDA, MASA…AAVI, RHRA…KIIL, and QRNK…ERLK. Residues 1022–1163 are neck or regulatory domain; the sequence is RRIILLQRWF…RARQRYKALK (142 aa). Positions 1164 to 2589 are tail; that stretch reads EERLKETKLE…LKNVKNSPQK (1426 aa). Over residues 1221–1240 the composition is skewed to basic and acidic residues; it reads RESSMDFSKESPDKQQERGR. The disordered stretch occupies residues 1221-1276; sequence RESSMDFSKESPDKQQERGRSQSGTDLQGDVIVRQRPKSLEDLHQKKVGRAKRESR. Residue serine 1243 is modified to Phosphoserine. The residue at position 1245 (threonine 1245) is a Phosphothreonine. Serine 1259 carries the post-translational modification Phosphoserine. Positions 1265-1292 form a coiled coil; that stretch reads QKKVGRAKRESRRMRELEQAIFSLELLK. Over residues 1266–1276 the composition is skewed to basic residues; the sequence is KKVGRAKRESR. Serine 1300 and serine 1318 each carry phosphoserine. Residues 1360-1375 show a composition bias toward polar residues; sequence PSTFTNPKFDSQNNAL. Residues 1360–1397 are disordered; sequence PSTFTNPKFDSQNNALSASSETSSTFSGKGASSDSEHL. Residues 1376 to 1386 are compositionally biased toward low complexity; sequence SASSETSSTFS. The stretch at 1493 to 1540 forms a coiled coil; sequence TVLKKLEKLNIEKEKRQKQLQQQNEKEMMEQIRQQTDILEKERKAFKT. Disordered regions lie at residues 1562–1602, 1618–1673, 1689–1726, 1765–1784, and 1872–1907; these read VERP…PPKD, SRTV…SRPI, GNPQ…RMAR, SELG…SEMT, and QYHP…KRGV. Composition is skewed to basic and acidic residues over residues 1620 to 1632 and 1659 to 1669; these read TVKE…RMGT and HRSDDPSREGS. Basic residues predominate over residues 1716–1726; the sequence is PAHKKKARMAR. The segment covering 1772–1784 has biased composition (polar residues); it reads SLGQASHSDSEMT. A compositionally biased stretch (basic and acidic residues) spans 1887–1899; sequence CRKEFKENKEPSP. The residue at position 2016 (serine 2016) is a Phosphoserine. The Phorbol-ester/DAG-type zinc finger occupies 2067–2116; sequence GHMFKATQYSIPTYCEYCSSLIWIMDRASVCKLCKYACHKKCCLKTTAKC. Residues 2131–2319 form the Rho-GAP domain; sequence VELSRLTSED…LIVVEQMNKY (189 aa). A disordered region spans residues 2365–2385; the sequence is SGKGRLHRGSHPNPSSPVIVR. Position 2380 is a phosphoserine (serine 2380). A coiled-coil region spans residues 2408 to 2444; that stretch reads TDQQQAAMQQEEKVLTEQIENLQKEKEELTFEMLVLE. Residues 2449–2527 are disordered; that stretch reads DDEALESEAS…NTTSSHGTRK (79 aa). A compositionally biased stretch (low complexity) spans 2504–2522; sequence SLDSVSSSVSSCLSNTTSS. The residue at position 2542 (serine 2542) is a Phosphoserine. Residues 2552-2614 are disordered; that stretch reads PLGQAKSLED…TVDSDCSSTQ (63 aa).

This sequence belongs to the TRAFAC class myosin-kinesin ATPase superfamily. Myosin family. In terms of processing, phosphorylated by ALPK1 following monosodium urate monohydrate (MSU)-induced inflammation. Expressed at high levels in brain, followed by testis and spleen. Expressed at very low levels, in kidney. Detected abundantly in brain and testis and at lower levels in adrenal gland, kidney, lung and spleen (at protein level). In adrenal gland it is mostly found in the medulla but not in the cortex. In brain, it is found in the cerebellum and the CA2-CA3 regions of the hippocampus.

Its subcellular location is the membrane. It is found in the cytoplasm. It localises to the synapse. The protein resides in the cell projection. The protein localises to the growth cone. Myosins are actin-based motor molecules with ATPase activity. Unconventional myosins serve in intracellular movements. Regulates Rho by stimulating it's GTPase activity in neurons. Required for the regulation of neurite branching and motor neuron axon guidance. This is Unconventional myosin-IXa (Myo9a) from Rattus norvegicus (Rat).